Reading from the N-terminus, the 199-residue chain is Elongation factor Ts (199 aa).

The tract at residues 81 to 84 (TDFV) is involved in Mg(2+) ion dislocation from EF-Tu.

Belongs to the EF-Ts family.

The protein localises to the cytoplasm. Associates with the EF-Tu.GDP complex and induces the exchange of GDP to GTP. It remains bound to the aminoacyl-tRNA.EF-Tu.GTP complex up to the GTP hydrolysis stage on the ribosome. This is Elongation factor Ts from Thermotoga petrophila (strain ATCC BAA-488 / DSM 13995 / JCM 10881 / RKU-1).